Consider the following 252-residue polypeptide: Imidazole glycerol phosphate synthase subunit HisF (252 aa).

Residues Asp-11 and Asp-130 contribute to the active site.

This sequence belongs to the HisA/HisF family. In terms of assembly, heterodimer of HisH and HisF.

The protein localises to the cytoplasm. It carries out the reaction 5-[(5-phospho-1-deoxy-D-ribulos-1-ylimino)methylamino]-1-(5-phospho-beta-D-ribosyl)imidazole-4-carboxamide + L-glutamine = D-erythro-1-(imidazol-4-yl)glycerol 3-phosphate + 5-amino-1-(5-phospho-beta-D-ribosyl)imidazole-4-carboxamide + L-glutamate + H(+). It functions in the pathway amino-acid biosynthesis; L-histidine biosynthesis; L-histidine from 5-phospho-alpha-D-ribose 1-diphosphate: step 5/9. In terms of biological role, IGPS catalyzes the conversion of PRFAR and glutamine to IGP, AICAR and glutamate. The HisF subunit catalyzes the cyclization activity that produces IGP and AICAR from PRFAR using the ammonia provided by the HisH subunit. The chain is Imidazole glycerol phosphate synthase subunit HisF from Bacillus cytotoxicus (strain DSM 22905 / CIP 110041 / 391-98 / NVH 391-98).